Reading from the N-terminus, the 720-residue chain is Methionine--tRNA ligase (720 aa).

Residues 27–37 (PYANGQIHIGH) carry the 'HIGH' region motif. Cysteine 158, cysteine 161, cysteine 171, and cysteine 174 together coordinate Zn(2+). The 'KMSKS' region signature appears at 348-352 (KMSKS). Residue lysine 351 coordinates ATP. A tRNA-binding domain is found at 614 to 720 (DFAKVDLRIA…SGAKPGMRVK (107 aa)).

The protein belongs to the class-I aminoacyl-tRNA synthetase family. MetG type 1 subfamily. As to quaternary structure, homodimer. It depends on Zn(2+) as a cofactor.

It is found in the cytoplasm. It catalyses the reaction tRNA(Met) + L-methionine + ATP = L-methionyl-tRNA(Met) + AMP + diphosphate. Its function is as follows. Is required not only for elongation of protein synthesis but also for the initiation of all mRNA translation through initiator tRNA(fMet) aminoacylation. This chain is Methionine--tRNA ligase, found in Burkholderia ambifaria (strain MC40-6).